The following is a 231-amino-acid chain: GFP-like fluorescent chromoprotein FP538 (231 aa).

Phe-65 bears the Phenylalanine amide; atypical mark. The 2-tetrahydro-2-pyridyl-5-imidazolinone (Lys-Gly) cross-link spans 66-68; that stretch reads KYG. The residue at position 67 (Tyr-67) is a 2,3-didehydrotyrosine.

It belongs to the GFP family. Homotetramer. In terms of processing, contains a chromophore consisting of modified amino acid residues. The chromophore is formed by autocatalytic backbone condensation between Xaa-N and Gly-(N+2), and oxidation of Tyr-(N+1) to didehydrotyrosine. In addition, the residue N lysine undergoes cyclization. The alpha-amino nitrogen is replaced by the epsilon-amino nitrogen, the peptide chain is broken, residue N-1 is released as an amide, and a double bond is formed between the alpha-carbon and the nitrogen so that a tetrahydropyridine ring results. Maturation of the chromophore requires nothing other than molecular oxygen. As to expression, tentacle and oral disk.

Functionally, pigment protein that is yellow in color. This Zoanthus sp. (Green polyp) protein is GFP-like fluorescent chromoprotein FP538.